A 142-amino-acid polypeptide reads, in one-letter code: Hdr-like menaquinol oxidoreductase cytochrome c subunit (142 aa).

Residues 1-6 (MYNKKY) lie on the Cytoplasmic side of the membrane. The chain crosses the membrane as a helical span at residues 7-27 (VIPLILVFLIGFFTPYWYNAM). The Extracellular segment spans residues 28-142 (AGTLGHVPTL…GIEELSKYFS (115 aa)). Heme-binding residues include Cys-93, Cys-96, His-97, Cys-104, Cys-107, His-108, Cys-117, Cys-120, and His-121.

In terms of assembly, consists of five subunits: an integral membrane subunit, a cytochrome b-like subunit, a cytochrome c subunit and two iron-sulfur subunits. Post-translationally, binds 3 heme groups per subunit.

Its subcellular location is the cell membrane. In terms of biological role, has menaquinol-oxidizing activity. HmeA, HmeB and HmeE subunits may together catalyze electron transfer from menaquinol to cytochrome c. The chain is Hdr-like menaquinol oxidoreductase cytochrome c subunit (hmeE) from Archaeoglobus fulgidus (strain ATCC 49558 / DSM 4304 / JCM 9628 / NBRC 100126 / VC-16).